Here is a 329-residue protein sequence, read N- to C-terminus: Src kinase-associated phosphoprotein 2 (329 aa).

A disordered region spans residues 58–95 (YAEDSEEEEDWDSNEGGSLQSERTDKDEEACEGAQQAP). Over residues 61-70 (DSEEEEDWDS) the composition is skewed to acidic residues. The region spanning 104-207 (SVFKAGYLEK…WVKQIDFVLK (104 aa)) is the PH domain. The segment at 240-263 (EDMPSPPPKVEPVSKHPPPTPAVD) is disordered. Pro residues predominate over residues 243 to 260 (PSPPPKVEPVSKHPPPTP). One can recognise an SH3 domain in the interval 267 to 328 (DYANYYQGLW…PKDYLMELYA (62 aa)).

This sequence belongs to the SKAP family. Post-translationally, phosphorylated on tyrosines.

The protein localises to the cytoplasm. In terms of biological role, may be involved in B-cell and macrophage adhesion processes. May play a role in src signaling pathway. This Takifugu rubripes (Japanese pufferfish) protein is Src kinase-associated phosphoprotein 2 (skap2).